The sequence spans 412 residues: uncharacterized protein (412 aa).

7 repeat units span residues 112 to 116 (GSIRS), 117 to 121 (GSIRS), 122 to 126 (GSIRD), 127 to 131 (GSIRD), 132 to 136 (GSIRS), 137 to 141 (GNIRD), and 142 to 146 (GSVRS). The segment at 112–146 (GSIRSGSIRSGSIRDGSIRDGSIRSGNIRDGSVRS) is 7 X 5 AA tandem repeats of G-[NS]-[IV]-R-[DNS]. Over residues 116–126 (SGSIRSGSIRD) the composition is skewed to low complexity. Residues 116 to 208 (SGSIRSGSIR…YSEKSIKPST (93 aa)) are disordered. The segment covering 192–208 (NHYAESEYSEKSIKPST) has biased composition (basic and acidic residues).

The protein belongs to the asfivirus B407L family.

This is an uncharacterized protein from Ornithodoros (relapsing fever ticks).